The sequence spans 638 residues: ATP-dependent zinc metalloprotease FtsH (638 aa).

The Cytoplasmic portion of the chain corresponds to 1 to 15 (MDNNHKGPNDPNSKK). The chain crosses the membrane as a helical span at residues 16–36 (PLLQNPLLLIAIFGIIIFVAM). Over 37-122 (RVMNSDEGFG…INYSGFSESN (86 aa)) the chain is Periplasmic. The helical transmembrane segment at 123-143 (FFADILGWLLPVLVILGLWMF) threads the bilayer. Residues 144 to 638 (MASRMQKNMG…RLVPLEEHAS (495 aa)) lie on the Cytoplasmic side of the membrane. 216–223 (GPPGTGKT) contacts ATP. A Zn(2+)-binding site is contributed by His-440. Residue Glu-441 is part of the active site. Residues His-444 and Asp-517 each coordinate Zn(2+).

The protein in the central section; belongs to the AAA ATPase family. In the C-terminal section; belongs to the peptidase M41 family. Homohexamer. Requires Zn(2+) as cofactor.

The protein localises to the cell inner membrane. Functionally, acts as a processive, ATP-dependent zinc metallopeptidase for both cytoplasmic and membrane proteins. Plays a role in the quality control of integral membrane proteins. In Helicobacter felis (strain ATCC 49179 / CCUG 28539 / NCTC 12436 / CS1), this protein is ATP-dependent zinc metalloprotease FtsH.